The primary structure comprises 361 residues: Peptide chain release factor 1 (361 aa).

At Q235 the chain carries N5-methylglutamine.

This sequence belongs to the prokaryotic/mitochondrial release factor family. Methylated by PrmC. Methylation increases the termination efficiency of RF1.

The protein resides in the cytoplasm. Its function is as follows. Peptide chain release factor 1 directs the termination of translation in response to the peptide chain termination codons UAG and UAA. The polypeptide is Peptide chain release factor 1 (Chlamydia abortus (strain DSM 27085 / S26/3) (Chlamydophila abortus)).